Reading from the N-terminus, the 952-residue chain is Anion exchange protein 4 (952 aa).

The segment at 1–41 (MKLPGQGDFESSDAHENAHSEEPDSGLGPGPGLNGPSGIDI) is disordered. Over residues 12 to 22 (SDAHENAHSEE) the composition is skewed to basic and acidic residues. Transmembrane regions (helical) follow at residues 385-405 (AVFY…GLLG), 413-433 (GVLE…LMAG), 470-490 (VGIW…SLLV), and 501-521 (FCAL…LNLI). N546 and N569 each carry an N-linked (GlcNAc...) asparagine glycan. The next 7 membrane-spanning stretches (helical) occupy residues 593 to 613 (VPDI…CAIA), 634 to 654 (FSSV…GLAT), 681 to 701 (PWWL…LIFM), 727 to 747 (LFCV…WYVS), 784 to 804 (GLVV…LKFI), 807 to 827 (PVLY…IQFV), and 870 to 890 (VVKS…LVAI). Positions 915 to 938 (ETIPENRSEPEHLFSGNDSEDSEL) are disordered. N-linked (GlcNAc...) asparagine glycans are attached at residues N920, N931, and N948.

It belongs to the anion exchanger (TC 2.A.31) family. In terms of tissue distribution, expressed in submandibular gland (SMG) duct and cortical collecting duct (CCD) of kidney. Lower expressed in duodenal villi.

It is found in the basolateral cell membrane. It catalyses the reaction 2 hydrogencarbonate(out) + chloride(in) + Na(+)(out) = 2 hydrogencarbonate(in) + chloride(out) + Na(+)(in). The enzyme catalyses K(+)(in) + 2 hydrogencarbonate(in) + chloride(out) = K(+)(out) + 2 hydrogencarbonate(out) + chloride(in). The catalysed reaction is Li(+)(in) + 2 hydrogencarbonate(in) + chloride(out) = Li(+)(out) + 2 hydrogencarbonate(out) + chloride(in). It carries out the reaction Rb(+)(in) + 2 hydrogencarbonate(in) + chloride(out) = Rb(+)(out) + 2 hydrogencarbonate(out) + chloride(in). It catalyses the reaction Cs(+)(in) + 2 hydrogencarbonate(in) + chloride(out) = Cs(+)(out) + 2 hydrogencarbonate(out) + chloride(in). With respect to regulation, cl(-)/HCO3(-) exchanger activity is substantially increased in response to 5 uM isoproterenol. Cl(-)/HCO3(-) exchanger activity is increased by both forskolin and coexpression with the catalytic subunit alpha of PKA. Electroneutral Cl(-)/HCO3(-) antiporter that favors chloride ion entry and efflux of hydrogencarbonate and sodium ion across the basolateral membrane and may participate in salivary secretion. Also mediates Cl(-)/HCO3(-) exchange activity in the presence of K(+) as well as Cs(+), Li(+), and Rb(+). Does not contribute to Cl(-)/HCO3(-) exchanger in the apical membrane of the upper villous epithelium. This Mus musculus (Mouse) protein is Anion exchange protein 4.